The following is a 240-amino-acid chain: Homeobox protein notochord (240 aa).

The span at Met-1–Pro-13 shows a compositional bias: polar residues. Disordered stretches follow at residues Met-1–Gly-21 and Gln-208–Ser-240. Residues Thr-149 to Gln-208 constitute a DNA-binding region (homeobox). Over residues Pro-213–Ser-225 the composition is skewed to low complexity.

It is found in the nucleus. Functionally, transcription factor that controls node morphogenesis. Acts downstream of both FOXA2 and Brachyury (T) during notochord development. Is essential for cilia formation in the posterior notochord (PNC) and for left-right patterning; acts upstream of FOXJ1 and RFX3 in this process and is required for the expression of various components important for axonemal assembly and function. Plays a role in regulating axial versus paraxial cell fate. Activates the transcription of ciliary proteins C11orf97 homolog, FAM183B and SPACA9 in the embryonic ventral node. This Mus musculus (Mouse) protein is Homeobox protein notochord (Noto).